Consider the following 69-residue polypeptide: Sec-independent protein translocase protein TatA (69 aa).

Residues 1 to 21 (MFGLGGQELILILLIILLLFG) form a helical membrane-spanning segment.

The protein belongs to the TatA/E family. Forms a complex with TatC.

The protein resides in the cell inner membrane. Functionally, part of the twin-arginine translocation (Tat) system that transports large folded proteins containing a characteristic twin-arginine motif in their signal peptide across membranes. TatA could form the protein-conducting channel of the Tat system. The protein is Sec-independent protein translocase protein TatA of Chlorobium phaeovibrioides (strain DSM 265 / 1930) (Prosthecochloris vibrioformis (strain DSM 265)).